A 295-amino-acid polypeptide reads, in one-letter code: Calcium-regulated actin-bundling protein (295 aa).

Monomer.

Functionally, may contribute to the structure and reorganization of filopodia and pseudopodia accompanying cell movements. The chain is Calcium-regulated actin-bundling protein (abpB) from Dictyostelium discoideum (Social amoeba).